A 234-amino-acid chain; its full sequence is Glutathione S-transferase sirG (234 aa).

In terms of domain architecture, GST N-terminal spans 15-99 (LYVVKATPTS…YLTDAYDHEG (85 aa)). The region spanning 105 to 230 (DLWERTQVNN…KALSQKFRPS (126 aa)) is the GST C-terminal domain.

The protein belongs to the GST superfamily.

The enzyme catalyses RX + glutathione = an S-substituted glutathione + a halide anion + H(+). It functions in the pathway mycotoxin biosynthesis. Its function is as follows. Glutathione S-transferase; part of the gene cluster that mediates the biosynthesis of sirodesmin PL, an epipolythiodioxopiperazine (ETP) characterized by a disulfide bridged cyclic dipeptide and that acts as a phytotoxin which is involved in the blackleg didease of canola. SirD catalyzes the O-prenylation of L-tyrosine (L-Tyr) in the presence of dimethylallyl diphosphate (DMAPP) to yield 4-O-dimethylallyl-L-Tyr, and therefore represents probably the first pathway-specific enzyme in the biosynthesis of sirodesmin PL. 4-O-dimethylallyl-L-Tyr, then undergoes condensation with L-Ser in a reaction catalyzed by the non-ribosomal peptide synthase sirP to form the diketopiperazine (DKP) backbone. Further bishydroxylation of the DKP performed by the cytochrome P450 monooxygenase sirC leads to the production of the intermediate phomamide. This step is essential to form the reactive thiol group required for toxicity of sirodesmin PL. The next steps of sirodesmin biosynthesis are not well understood yet, but some predictions could be made from intermediate compounds identification. Phomamide is converted into phomalizarine via oxidation, probably by sirT. Further oxidation, methylation (by sirM or sirN) and reduction steps convert phomalizarine to deacetyl sirodesmin. Finally, acetyltransferase sirH probably acetylates deacetyl sirodesmin to produce sirodesmin PL. The chain is Glutathione S-transferase sirG from Leptosphaeria maculans (Blackleg fungus).